We begin with the raw amino-acid sequence, 518 residues long: MHLVDRVGANAPHKKYERVTTQPENPFFNIVHNQSVAIIPSFTLESGVILYDCPVAYKTFGVLNESADNVMVICHALTGSADVEDWWGPLIGPGRAFDTSRYFIVCCNSMGSPYGSASPCTLDSTTGRRYGPEFPLTTVRDDVRYGSTITMKLGCLLTYYRIHKLIMDDLGVRQIAVVIGGSMGGMLALEWAYFGKDYVKAVVALATSARHSAWCISWGEAQRQSIYSDPKYDDGYYSFSDPPYTGLGAARMSALLTYRSRNSFESRFGRNIPDPSRHPYINTSQPPSHPAEEHYDIHNEGFRNRKGFRRSSTTTSDAPPSPTRTSSTSSTDAITPASTTPLHPSRAQPSGIATPPNSVSDPFRPVKRPCPTYFSAQSYLRYQADKFVKRFDANCYIAITRKLDTHDVSRGRTSTLHEALAMIEQPTLIIGIESDGLFTFAEQMELAEYIPDARLKRIDSPEGHDAFLIMFAEVNRYICEFLREVQPEIMGKEGVHVESKVGEIRASTTGEVEDITHW.

Positions 69–468 constitute an AB hydrolase-1 domain; it reads NVMVICHALT…DSPEGHDAFL (400 aa). Serine 182 is a catalytic residue. Serine 182 acts as the Nucleophile in catalysis. The segment at 267–365 is disordered; that stretch reads RFGRNIPDPS…PNSVSDPFRP (99 aa). Residues 290-303 are compositionally biased toward basic and acidic residues; sequence PAEEHYDIHNEGFR. Over residues 310-341 the composition is skewed to low complexity; the sequence is RSSTTTSDAPPSPTRTSSTSSTDAITPASTTP. Active-site residues include aspartate 435 and histidine 464.

It belongs to the AB hydrolase superfamily. MetX family.

The catalysed reaction is L-homoserine + acetyl-CoA = O-acetyl-L-homoserine + CoA. Its pathway is amino-acid biosynthesis; L-methionine biosynthesis via de novo pathway; O-acetyl-L-homoserine from L-homoserine: step 1/1. Functionally, commits homoserine to the methionine biosynthesis pathway by catalyzing its O-acetylation. This chain is Homoserine O-acetyltransferase (MET2), found in Ascobolus immersus.